Reading from the N-terminus, the 145-residue chain is Peptide methionine sulfoxide reductase MsrB (145 aa).

A MsrB domain is found at 6–129 (KNERLQQLTD…NSAALRFIPV (124 aa)). The active-site Nucleophile is the C118.

Belongs to the MsrB Met sulfoxide reductase family.

It carries out the reaction L-methionyl-[protein] + [thioredoxin]-disulfide + H2O = L-methionyl-(R)-S-oxide-[protein] + [thioredoxin]-dithiol. The protein is Peptide methionine sulfoxide reductase MsrB of Listeria monocytogenes serotype 4b (strain CLIP80459).